Consider the following 422-residue polypeptide: Inhibitory synaptic factor 2A (422 aa).

The interval 143–163 is disordered; that stretch reads FLADSKEKSEAGPMEEPRPCS. The segment covering 146–160 has biased composition (basic and acidic residues); it reads DSKEKSEAGPMEEPR. Phosphoserine is present on Ser177. Positions 344-370 form a coiled coil; it reads TEVVDLKAQLQVMENLISSSQETIKVL.

This sequence belongs to the INSYN2 family. Interacts with GPHN.

The protein localises to the postsynaptic density. Functionally, component of the protein machinery at the inhibitory synapses, probably acting as a scaffold. Inhibitory synapses dampen neuronal activity through postsynaptic hyperpolarization. This synaptic inhibition is fundamental for the functioning of the central nervous system, shaping and orchestrating the flow of information through neuronal networks to generate a precise neural code. This Mus musculus (Mouse) protein is Inhibitory synaptic factor 2A.